A 284-amino-acid polypeptide reads, in one-letter code: Bifunctional protein FolD (284 aa).

NADP(+) contacts are provided by residues 166–168 (GAS) and Ile-232.

This sequence belongs to the tetrahydrofolate dehydrogenase/cyclohydrolase family. Homodimer.

The catalysed reaction is (6R)-5,10-methylene-5,6,7,8-tetrahydrofolate + NADP(+) = (6R)-5,10-methenyltetrahydrofolate + NADPH. The enzyme catalyses (6R)-5,10-methenyltetrahydrofolate + H2O = (6R)-10-formyltetrahydrofolate + H(+). It functions in the pathway one-carbon metabolism; tetrahydrofolate interconversion. In terms of biological role, catalyzes the oxidation of 5,10-methylenetetrahydrofolate to 5,10-methenyltetrahydrofolate and then the hydrolysis of 5,10-methenyltetrahydrofolate to 10-formyltetrahydrofolate. This is Bifunctional protein FolD from Shewanella frigidimarina (strain NCIMB 400).